Reading from the N-terminus, the 226-residue chain is MAQTDVLNVTGNKIGTVELKDSIFNIEPNYDVMFRYVDMQLANRRAGTAKAKTRSEVSGGGRKPWPQKHTGRARTGSIRNPLWRHGGVIHGPKPKDWSKKLNKKMKKLALKSALSLRFKEGNLVVVDDIKLDRPKTKQMREIVKNLGLSDAKKVLFILPWKRDEYENVKLSGRNIPGVKVIIADNPGNLVNGRSSNIDGLNVFDILNHEKIVFTVDLVRKIEEVLG.

A disordered region spans residues 47 to 74 (GTAKAKTRSEVSGGGRKPWPQKHTGRAR).

Belongs to the universal ribosomal protein uL4 family. As to quaternary structure, part of the 50S ribosomal subunit.

Its function is as follows. One of the primary rRNA binding proteins, this protein initially binds near the 5'-end of the 23S rRNA. It is important during the early stages of 50S assembly. It makes multiple contacts with different domains of the 23S rRNA in the assembled 50S subunit and ribosome. In terms of biological role, forms part of the polypeptide exit tunnel. In Kosmotoga olearia (strain ATCC BAA-1733 / DSM 21960 / TBF 19.5.1), this protein is Large ribosomal subunit protein uL4.